A 918-amino-acid polypeptide reads, in one-letter code: Interleukin-6 receptor subunit beta (918 aa).

Residues Met1 to Gly22 form the signal peptide. At Gln23 to Glu618 the chain is on the extracellular side. Residues Glu26–Ile120 enclose the Ig-like C2-type domain. Cystine bridges form between Cys28–Cys54 and Cys48–Cys103. N-linked (GlcNAc...) asparagine glycosylation is found at Asn43, Asn61, Asn83, and Asn131. 5 consecutive Fibronectin type-III domains span residues Pro125–Pro215, Pro223–Asp323, Ala328–Ser418, Ala422–Ala516, and Pro518–Phe612. Cys134 and Cys144 are oxidised to a cystine. Asn157 carries N-linked (GlcNAc...) asparagine glycosylation. A disulfide bond links Cys172 and Cys181. Residues Asn205 and Asn226 are each glycosylated (N-linked (GlcNAc...) asparagine). Positions Trp309–Ser313 match the WSXWS motif motif. 2 N-linked (GlcNAc...) asparagine glycosylation sites follow: Asn382 and Asn389. The cysteines at positions 457 and 465 are disulfide-linked. Asn477 and Asn552 each carry an N-linked (GlcNAc...) asparagine glycan. Residues Ala619–Phe640 form a helical membrane-spanning segment. Residues Asn641–Gln918 are Cytoplasmic-facing. A Box 1 motif motif is present at residues Ile650 to Ser658. Disordered regions lie at residues Lys659 to Asp679, Thr720 to Ser754, Val773 to Leu795, and Ser817 to Glu842. A phosphoserine mark is found at Ser660 and Ser666. The segment covering Ser730–Ser751 has biased composition (low complexity). A compositionally biased stretch (polar residues) spans Val773–Leu785. A phosphoserine mark is found at Ser781, Ser788, Ser828, and Ser838.

The protein belongs to the type I cytokine receptor family. Type 2 subfamily. As to quaternary structure, component of a hexamer of two molecules each of IL6, IL6R and IL6ST; associates with the complex IL6:IL6R but does not interact with IL6. Forms heterodimers composed of LIFR and IL6ST (type I OSM receptor) which are activated by LIF and OSM. Also forms heterodimers composed of OSMR and IL6ST (type II receptor) which are activated by OSM but not by LIF. Interacts with HCK. Interacts with INPP5D/SHIP1. Interacts with SRC and YES. Interacts with ARMH4; this interaction prevents IL6ST protein homodimerization and bridges ARMH4 with IL6R and STAT3 and therefore inhibits phosphorylation of STAT3 at 'Tyr-705'. In terms of processing, phosphorylation of Ser-781 down-regulates cell surface expression. Post-translationally, heavily N-glycosylated. Glycosylation is required for protein stability and localization in plasma membrane but not for ligand binding. Found in hepatocytes, astrocytes, fibroblasts and endothelial cells.

It is found in the cell membrane. In terms of biological role, signal-transducing molecule. The receptor systems for IL6, LIF, OSM, CNTF, IL11, CTF1 and BSF3 can utilize IL6ST for initiating signal transmission. Binding of IL6 to IL6R induces IL6ST homodimerization and formation of a high-affinity receptor complex, which activates the intracellular JAK-MAPK and JAK-STAT3 signaling pathways. That causes phosphorylation of IL6ST tyrosine residues which in turn activates STAT3. In parallel, the IL6 signaling pathway induces the expression of two cytokine receptor signaling inhibitors, SOCS1 and SOCS3, which inhibit JAK and terminate the activity of the IL6 signaling pathway as a negative feedback loop. Also activates the yes-associated protein 1 (YAP) and NOTCH pathways to control inflammation-induced epithelial regeneration, independently of STAT3. Mediates signals which regulate immune response, hematopoiesis, pain control and bone metabolism. Has a role in embryonic development. Essential for survival of motor and sensory neurons and for differentiation of astrocytes. Required for expression of TRPA1 in nociceptive neurons. Required for the maintenance of PTH1R expression in the osteoblast lineage and for the stimulation of PTH-induced osteoblast differentiation. Required for normal trabecular bone mass and cortical bone composition. The polypeptide is Interleukin-6 receptor subunit beta (Rattus norvegicus (Rat)).